A 154-amino-acid polypeptide reads, in one-letter code: Large-conductance mechanosensitive channel (154 aa).

Helical transmembrane passes span 14–34 (VVDL…VNSL) and 86–106 (VFIN…FFVV).

It belongs to the MscL family. In terms of assembly, homopentamer.

Its subcellular location is the cell membrane. Its function is as follows. Channel that opens in response to stretch forces in the membrane lipid bilayer. May participate in the regulation of osmotic pressure changes within the cell. This is Large-conductance mechanosensitive channel from Dehalococcoides mccartyi (strain ATCC BAA-2100 / JCM 16839 / KCTC 5957 / BAV1).